Reading from the N-terminus, the 287-residue chain is Formamidopyrimidine-DNA glycosylase (287 aa).

The active-site Schiff-base intermediate with DNA is P2. Residue E3 is the Proton donor of the active site. K61 acts as the Proton donor; for beta-elimination activity in catalysis. Positions 95, 115, and 157 each coordinate DNA. The FPG-type zinc-finger motif lies at 243-277 (NVYGRADQPCRRCGTPVRREAFMNRSSYSCPRCQP). R267 acts as the Proton donor; for delta-elimination activity in catalysis.

It belongs to the FPG family. In terms of assembly, monomer. Zn(2+) serves as cofactor.

The catalysed reaction is Hydrolysis of DNA containing ring-opened 7-methylguanine residues, releasing 2,6-diamino-4-hydroxy-5-(N-methyl)formamidopyrimidine.. It carries out the reaction 2'-deoxyribonucleotide-(2'-deoxyribose 5'-phosphate)-2'-deoxyribonucleotide-DNA = a 3'-end 2'-deoxyribonucleotide-(2,3-dehydro-2,3-deoxyribose 5'-phosphate)-DNA + a 5'-end 5'-phospho-2'-deoxyribonucleoside-DNA + H(+). Its function is as follows. Involved in base excision repair of DNA damaged by oxidation or by mutagenic agents. Acts as a DNA glycosylase that recognizes and removes damaged bases. Has a preference for oxidized purines, such as 7,8-dihydro-8-oxoguanine (8-oxoG). Has AP (apurinic/apyrimidinic) lyase activity and introduces nicks in the DNA strand. Cleaves the DNA backbone by beta-delta elimination to generate a single-strand break at the site of the removed base with both 3'- and 5'-phosphates. The sequence is that of Formamidopyrimidine-DNA glycosylase from Salinispora arenicola (strain CNS-205).